A 194-amino-acid polypeptide reads, in one-letter code: Gonadal protein gdl (194 aa).

Belongs to the gonadal family. In terms of tissue distribution, in stage 6-14 egg chamber nurse cells and oocytes of adult females and spermatocyte cysts and bundles of maturing sperm of larval, pupal and adult males.

This is Gonadal protein gdl (gdl) from Drosophila melanogaster (Fruit fly).